A 76-amino-acid polypeptide reads, in one-letter code: Protein OPG128 (76 aa).

An intrachain disulfide couples Cys-17 to Cys-21.

This sequence belongs to the orthopoxvirus OPG128 family. As to quaternary structure, interacts with sulfhydryl oxidase OPG072; this interaction involves formation of a transient disulfide-bonded intermediate, allowing disulfide bond transfer. Interacts with OPG088; this interaction involves formation of a transient disulfide-bonded intermediate, allowing disulfide bond transfer.

Late protein which probably participates in disulfide bond formation by functioning as a thiol-disulfide transfer protein between membrane-associated OPG072 and OPG08. The complete pathway for formation of disulfide bonds in intracellular virion membrane proteins sequentially involves oxidation of OPG072, OPG128 and OPG08. This is Protein OPG128 (OPG128) from Homo sapiens (Human).